Here is a 283-residue protein sequence, read N- to C-terminus: Non-selective voltage-gated ion channel VDAC1 (283 aa).

The residue at position 2 (Ala-2) is an N-acetylalanine. Lys-12 lines the ATP pocket. A Glycyl lysine isopeptide (Lys-Gly) (interchain with G-Cter in ubiquitin) cross-link involves residue Lys-12. A Phosphoserine modification is found at Ser-13. Thr-19 bears the Phosphothreonine mark. Lys-20 is an ATP binding site. Lys-20 carries the post-translational modification N6-acetyllysine; alternate. An N6-succinyllysine; alternate modification is found at Lys-20. A Glycyl lysine isopeptide (Lys-Gly) (interchain with G-Cter in ubiquitin); alternate cross-link involves residue Lys-20. The next 2 membrane-spanning stretches (beta stranded) occupy residues 26-35 (LIKLDLKTKS) and 39-47 (LEFTSSGSA). Glycyl lysine isopeptide (Lys-Gly) (interchain with G-Cter in ubiquitin) cross-links involve residues Lys-53 and Lys-61. The chain crosses the membrane as a beta stranded span at residues 54-64 (VTGSLETKYRW). The residue at position 67 (Tyr-67) is a Phosphotyrosine. A run of 3 beta stranded transmembrane segments spans residues 69–76 (LTFTEKWN), 80–89 (TLGTEITVED), and 95–104 (LKLTFDSSFS). Thr-107 carries the phosphothreonine modification. An N6-acetyllysine; alternate modification is found at Lys-109. Residue Lys-109 forms a Glycyl lysine isopeptide (Lys-Gly) (interchain with G-Cter in ubiquitin); alternate linkage. A Glycyl lysine isopeptide (Lys-Gly) (interchain with G-Cter in ubiquitin) cross-link involves residue Lys-110. The next 4 membrane-spanning stretches (beta stranded) occupy residues 111 to 120 (NAKIKTGYKR), 123 to 130 (VNLGCDVD), 137 to 145 (SIRGALVLG), and 150 to 158 (LAGYQMNFE). Residue Lys-161 forms a Glycyl lysine isopeptide (Lys-Gly) (interchain with G-Cter in ubiquitin) linkage. 6 consecutive transmembrane segments (beta stranded) span residues 163 to 175 (RVTQSNFAVGYKT), 178 to 185 (FQLHTNVN), 189 to 198 (EFGGSIYQKV), 202 to 211 (LETAVNLAWT), 218 to 227 (RFGIAAKYQI), and 231 to 238 (ACFSAKVN). A Phosphoserine; by NEK1 modification is found at Ser-193. Position 240 is a phosphoserine (Ser-240). 242-244 (LIG) is an NAD(+) binding site. A beta stranded membrane pass occupies residues 242–251 (LIGLGYTQTL). At Lys-252 the chain carries N6-acetyllysine. A beta stranded membrane pass occupies residues 254 to 263 (GIKLTLSALL). 260 to 264 (SALLD) contacts NAD(+). At Lys-266 the chain carries N6-acetyllysine; alternate. A Glycyl lysine isopeptide (Lys-Gly) (interchain with G-Cter in ubiquitin); alternate cross-link involves residue Lys-266. A beta stranded membrane pass occupies residues 273–282 (HKLGLGLEFQ). A Glycyl lysine isopeptide (Lys-Gly) (interchain with G-Cter in ubiquitin) cross-link involves residue Lys-274.

It belongs to the eukaryotic mitochondrial porin family. Homodimer and homotrimer; in response to cyclic AMP or calcium; oligomerization is required for scramblase activity. Component of the mitochondrial permeability transition pore complex (mPTPC), at least composed of SPG7, VDAC1 and PPIF. Interacts with SPG7, NIPSNAP2 and SLC25A30. Interacts with hexokinases including HK1. The HK1-VDAC1 complex interacts with ATF2. Interacts with BCL2L1. Interacts with BAK1. Interacts with RTL10/BOP (via BH3 domain). Interacts with amyloid-beta and APP; induces VDAC1 dephosphorylation. Interacts with TMEM41B. Interacts with BCAP31. Interacts with HSPA9; this interaction couples ITPR1 to VDAC1. Post-translationally, phosphorylation at Ser-193 by NEK1 promotes the closed conformational state preventing excessive mitochondrial membrane permeability and subsequent apoptotic cell death after injury. Phosphorylation by the AKT-GSK3B axis stabilizes the protein probably by preventing ubiquitin-mediated proteasomal degradation. Ubiquitinated. Undergoes monoubiquitination and polyubiquitination by PRKN; monoubiquitination at Lys-274 inhibits apoptosis, whereas polyubiquitination leads to its degradation and promotes mitophagy. Deubiquitinated by USP30.

It is found in the mitochondrion outer membrane. The protein localises to the cell membrane. Its subcellular location is the membrane raft. It carries out the reaction chloride(in) = chloride(out). It catalyses the reaction K(+)(in) = K(+)(out). The catalysed reaction is ATP(in) = ATP(out). The enzyme catalyses Ca(2+)(in) = Ca(2+)(out). It carries out the reaction Na(+)(in) = Na(+)(out). It catalyses the reaction Mg(2+)(in) = Mg(2+)(out). The catalysed reaction is L-glutamate(out) = L-glutamate(in). The enzyme catalyses dopamine(out) = dopamine(in). It carries out the reaction acetylcholine(in) = acetylcholine(out). It catalyses the reaction Fe(III)-[cytochrome c](out) = Fe(III)-[cytochrome c](in). The catalysed reaction is a 1,2-diacyl-sn-glycero-3-phosphocholine(in) = a 1,2-diacyl-sn-glycero-3-phosphocholine(out). The enzyme catalyses a 1,2-diacyl-sn-glycero-3-phospho-L-serine(in) = a 1,2-diacyl-sn-glycero-3-phospho-L-serine(out). With respect to regulation, inhibited by nitric oxide. Its function is as follows. Non-selective voltage-gated ion channel that mediates the transport of anions and cations through the mitochondrion outer membrane and plasma membrane. The channel at the outer mitochondrial membrane allows diffusion of small hydrophilic molecules; in the plasma membrane it is involved in cell volume regulation and apoptosis. It adopts an open conformation at low or zero membrane potential and a closed conformation at potentials above 30-40 mV. The open state has a weak anion selectivity whereas the closed state is cation-selective. Binds various signaling molecules, including the sphingolipid ceramide, the phospholipid phosphatidylcholine, and the sterols cholesterol and oxysterol. In depolarized mitochondria, acts downstream of PRKN and PINK1 to promote mitophagy or prevent apoptosis; polyubiquitination by PRKN promotes mitophagy, while monoubiquitination by PRKN decreases mitochondrial calcium influx which ultimately inhibits apoptosis. May participate in the formation of the permeability transition pore complex (PTPC) responsible for the release of mitochondrial products that triggers apoptosis. May mediate ATP export from cells. Part of a complex composed of HSPA9, ITPR1 and VDAC1 that regulates mitochondrial calcium-dependent apoptosis by facilitating calcium transport from the ER lumen to the mitochondria intermembrane space thus providing calcium for the downstream calcium channel MCU that directly releases it into mitochondria matrix. Mediates cytochrome c efflux. Functionally, catalyzes the scrambling of phospholipids across the outer mitochondrial membrane; the mechanism is unrelated to channel activity and is capable of translocating both anionic and zwitterionic phospholipids. The chain is Non-selective voltage-gated ion channel VDAC1 from Sus scrofa (Pig).